The sequence spans 149 residues: 3-dehydroquinate dehydratase (149 aa).

Y23 acts as the Proton acceptor in catalysis. Substrate is bound by residues N75, H81, and D88. H101 acts as the Proton donor in catalysis. Substrate-binding positions include 102-103 and R112; that span reads MS.

Belongs to the type-II 3-dehydroquinase family. Homododecamer.

The catalysed reaction is 3-dehydroquinate = 3-dehydroshikimate + H2O. Its pathway is metabolic intermediate biosynthesis; chorismate biosynthesis; chorismate from D-erythrose 4-phosphate and phosphoenolpyruvate: step 3/7. Functionally, catalyzes a trans-dehydration via an enolate intermediate. In Pelobacter propionicus (strain DSM 2379 / NBRC 103807 / OttBd1), this protein is 3-dehydroquinate dehydratase.